An 84-amino-acid polypeptide reads, in one-letter code: FMRFamide-like neuropeptides 26 (84 aa).

Positions 1 to 19 are cleaved as a signal peptide; the sequence is MKVMFMLALLFSSLVATSA. Residues 20–48 constitute a propeptide that is removed on maturation; sequence FRLPFQFFGANEDFNSGLTKRNYYESKPY. Phenylalanine amide occurs at positions 61 and 82.

Belongs to the FARP (FMRFamide related peptide) family. In terms of tissue distribution, each flp gene is expressed in a distinct set of neurons.

The protein localises to the secreted. Functionally, FMRFamides and FMRFamide-like peptides are neuropeptides. This is FMRFamide-like neuropeptides 26 from Caenorhabditis elegans.